We begin with the raw amino-acid sequence, 283 residues long: 9,11-endoperoxide prostaglandin H2 reductase (283 aa).

NADP(+) is bound by residues 23–24 (VW) and Asp-48. Tyr-53 functions as the Proton donor in the catalytic mechanism. His-111 contributes to the substrate binding site. NADP(+) contacts are provided by residues 140–141 (SN), Gln-162, 188–193 (WSPLGS), 234–236 (KST), and 240–244 (RIQEN). Residues 264 to 283 (NEDKRIGGDPDNFFPGGEEA) are disordered.

This sequence belongs to the aldo/keto reductase family. In terms of assembly, monomer.

It localises to the cytoplasm. The enzyme catalyses prostaglandin F2alpha + NADP(+) = prostaglandin H2 + NADPH + H(+). Its pathway is lipid metabolism; prostaglandin biosynthesis. Functionally, catalyzes the NADP-dependent formation of prostaglandin F2-alpha from prostaglandin H2. Also has aldo/ketoreductase activity towards the synthetic substrates 9,10-phenanthrenequinone and p-nitrobenzaldehyde. The chain is 9,11-endoperoxide prostaglandin H2 reductase from Trypanosoma cruzi (strain CL Brener).